Consider the following 214-residue polypeptide: Octanoyltransferase (214 aa).

The BPL/LPL catalytic domain maps to 34–214 (GLQKELVWLL…KFNEIFSSFN (181 aa)). Substrate-binding positions include 73–80 (RGGKYTYH), 145–147 (AFG), and 158–160 (GVS). Catalysis depends on Cys176, which acts as the Acyl-thioester intermediate.

Belongs to the LipB family.

It is found in the cytoplasm. It carries out the reaction octanoyl-[ACP] + L-lysyl-[protein] = N(6)-octanoyl-L-lysyl-[protein] + holo-[ACP] + H(+). Its pathway is protein modification; protein lipoylation via endogenous pathway; protein N(6)-(lipoyl)lysine from octanoyl-[acyl-carrier-protein]: step 1/2. Functionally, catalyzes the transfer of endogenously produced octanoic acid from octanoyl-acyl-carrier-protein onto the lipoyl domains of lipoate-dependent enzymes. Lipoyl-ACP can also act as a substrate although octanoyl-ACP is likely to be the physiological substrate. The chain is Octanoyltransferase from Ehrlichia canis (strain Jake).